The following is a 210-amino-acid chain: Prolactin (210 aa).

The N-terminal stretch at 1–23 is a signal peptide; it reads MTQGSRLYFAVAVLMCGFVSING. 2 disulfides stabilise this stretch: Cys69/Cys183 and Cys200/Cys210.

Belongs to the somatotropin/prolactin family. In terms of tissue distribution, pituitary gland.

It is found in the secreted. The protein is Prolactin (prl1) of Carassius auratus (Goldfish).